Reading from the N-terminus, the 529-residue chain is UDP-glucuronosyltransferase 2B18 (529 aa).

The signal sequence occupies residues 1–21 (MSVKWTSVILLIQLSFYFSSG). N67 and N68 each carry an N-linked (GlcNAc...) asparagine glycan. Residues 493–513 (VIGFLLACVATVIFIIMKCCL) traverse the membrane as a helical segment.

This sequence belongs to the UDP-glycosyltransferase family. In terms of tissue distribution, expressed in liver, prostate, kidney, testis, adrenal, bile duct, bladder, colon, small intestine, cerebellum and pancreas.

The protein localises to the microsome membrane. It is found in the endoplasmic reticulum membrane. It catalyses the reaction glucuronate acceptor + UDP-alpha-D-glucuronate = acceptor beta-D-glucuronoside + UDP + H(+). In terms of biological role, UDPGT is of major importance in the conjugation and subsequent elimination of potentially toxic xenobiotics and endogenous compounds. This isozyme displays activity toward 3-hydroxyandrogens. It is principally active on C19 steroids having a hydroxyl group at position 3-alpha of the steroid molecule and also active on planar phenols and bile acids. The polypeptide is UDP-glucuronosyltransferase 2B18 (UGT2B18) (Macaca fascicularis (Crab-eating macaque)).